The sequence spans 209 residues: ATP-dependent Clp protease proteolytic subunit (209 aa).

The active-site Nucleophile is S111. The active site involves H136.

It belongs to the peptidase S14 family. In terms of assembly, fourteen ClpP subunits assemble into 2 heptameric rings which stack back to back to give a disk-like structure with a central cavity, resembling the structure of eukaryotic proteasomes.

It localises to the cytoplasm. The enzyme catalyses Hydrolysis of proteins to small peptides in the presence of ATP and magnesium. alpha-casein is the usual test substrate. In the absence of ATP, only oligopeptides shorter than five residues are hydrolyzed (such as succinyl-Leu-Tyr-|-NHMec, and Leu-Tyr-Leu-|-Tyr-Trp, in which cleavage of the -Tyr-|-Leu- and -Tyr-|-Trp bonds also occurs).. Cleaves peptides in various proteins in a process that requires ATP hydrolysis. Has a chymotrypsin-like activity. Plays a major role in the degradation of misfolded proteins. The sequence is that of ATP-dependent Clp protease proteolytic subunit from Dechloromonas aromatica (strain RCB).